Here is a 481-residue protein sequence, read N- to C-terminus: Glutamyl-tRNA(Gln) amidotransferase subunit A (481 aa).

Active-site charge relay system residues include K74 and S149. The active-site Acyl-ester intermediate is the S173.

Belongs to the amidase family. GatA subfamily. Heterotrimer of A, B and C subunits.

It carries out the reaction L-glutamyl-tRNA(Gln) + L-glutamine + ATP + H2O = L-glutaminyl-tRNA(Gln) + L-glutamate + ADP + phosphate + H(+). Functionally, allows the formation of correctly charged Gln-tRNA(Gln) through the transamidation of misacylated Glu-tRNA(Gln) in organisms which lack glutaminyl-tRNA synthetase. The reaction takes place in the presence of glutamine and ATP through an activated gamma-phospho-Glu-tRNA(Gln). This is Glutamyl-tRNA(Gln) amidotransferase subunit A from Francisella philomiragia subsp. philomiragia (strain ATCC 25017 / CCUG 19701 / FSC 153 / O#319-036).